The following is a 325-amino-acid chain: 5-dehydro-2-deoxygluconokinase (325 aa).

Belongs to the carbohydrate kinase PfkB family.

It catalyses the reaction 5-dehydro-2-deoxy-D-gluconate + ATP = 6-phospho-5-dehydro-2-deoxy-D-gluconate + ADP + H(+). Its pathway is polyol metabolism; myo-inositol degradation into acetyl-CoA; acetyl-CoA from myo-inositol: step 5/7. Its function is as follows. Catalyzes the phosphorylation of 5-dehydro-2-deoxy-D-gluconate (2-deoxy-5-keto-D-gluconate or DKG) to 6-phospho-5-dehydro-2-deoxy-D-gluconate (DKGP). In Listeria monocytogenes serotype 4a (strain HCC23), this protein is 5-dehydro-2-deoxygluconokinase.